A 183-amino-acid polypeptide reads, in one-letter code: Guanylate kinase (183 aa).

The 179-residue stretch at 4–182 (GRVVVLTGPS…AITALEAAIF (179 aa)) folds into the Guanylate kinase-like domain. Residue 11 to 18 (GPSGVGKG) coordinates ATP.

This sequence belongs to the guanylate kinase family.

It localises to the cytoplasm. The enzyme catalyses GMP + ATP = GDP + ADP. It carries out the reaction dZMP + ATP = dZDP + ADP. It functions in the pathway purine metabolism. Functionally, essential for recycling GMP and indirectly, cGMP. Its function is as follows. (Microbial infection) Catalyzes the phosphorylation of dZMP to dZDP, when the bacterium is infected by a phage that produces the substrate for the synthesis of dZTP (2- amino-2'-deoxyadenosine 5'-triphosphate), which is then used by the phage as a DNA polymerase substrate. The polypeptide is Guanylate kinase (Synechococcus elongatus (strain ATCC 33912 / PCC 7942 / FACHB-805) (Anacystis nidulans R2)).